A 132-amino-acid chain; its full sequence is Ribonuclease P protein component (132 aa).

Belongs to the RnpA family. Consists of a catalytic RNA component (M1 or rnpB) and a protein subunit.

The enzyme catalyses Endonucleolytic cleavage of RNA, removing 5'-extranucleotides from tRNA precursor.. In terms of biological role, RNaseP catalyzes the removal of the 5'-leader sequence from pre-tRNA to produce the mature 5'-terminus. It can also cleave other RNA substrates such as 4.5S RNA. The protein component plays an auxiliary but essential role in vivo by binding to the 5'-leader sequence and broadening the substrate specificity of the ribozyme. In Marinobacter nauticus (strain ATCC 700491 / DSM 11845 / VT8) (Marinobacter aquaeolei), this protein is Ribonuclease P protein component.